A 405-amino-acid chain; its full sequence is FK506-binding protein 4 (405 aa).

Disordered regions lie at residues T49 to L117 and Q164 to K297. Acidic residues-rich tracts occupy residues E59–V84, V98–L117, and Q165–A201. Composition is skewed to basic and acidic residues over residues R238–A252 and A265–P276. Residues G319–N405 enclose the PPIase FKBP-type domain.

This sequence belongs to the FKBP-type PPIase family. FKBP3/4 subfamily. Binds to histones H3 and H4.

Its subcellular location is the nucleus. The catalysed reaction is [protein]-peptidylproline (omega=180) = [protein]-peptidylproline (omega=0). Inhibited by both FK506 and rapamycin. Functionally, PPIase that acts as a histone chaperone. Histone proline isomerase that increases the rate of cis-trans isomerization at prolines on the histone H3 N-terminal tail. Proline isomerization influences H3 methylation thereby regulating gene expression. This is FK506-binding protein 4 (FPR4) from Cryptococcus neoformans var. neoformans serotype D (strain B-3501A) (Filobasidiella neoformans).